The sequence spans 334 residues: Glyceraldehyde-3-phosphate dehydrogenase (334 aa).

NAD(+) is bound by residues 12–13, aspartate 34, and arginine 79; that span reads RI. D-glyceraldehyde 3-phosphate contacts are provided by residues 150–152, threonine 181, 210–211, and arginine 233; these read SCT and TG. Cysteine 151 acts as the Nucleophile in catalysis. An NAD(+)-binding site is contributed by asparagine 315.

The protein belongs to the glyceraldehyde-3-phosphate dehydrogenase family. As to quaternary structure, homotetramer.

The protein resides in the cytoplasm. It catalyses the reaction D-glyceraldehyde 3-phosphate + phosphate + NAD(+) = (2R)-3-phospho-glyceroyl phosphate + NADH + H(+). It participates in carbohydrate degradation; glycolysis; pyruvate from D-glyceraldehyde 3-phosphate: step 1/5. This chain is Glyceraldehyde-3-phosphate dehydrogenase (GPD), found in Wickerhamomyces ciferrii (strain ATCC 14091 / BCRC 22168 / CBS 111 / JCM 3599 / NBRC 0793 / NRRL Y-1031 F-60-10) (Yeast).